The chain runs to 271 residues: Peroxiredoxin-4 (271 aa).

The signal sequence occupies residues 1 to 37; the sequence is MEALPLLAATTPDHGRHRRLLLLPLLLFLLPAGAVQG. Positions 79-237 constitute a Thioredoxin domain; sequence AKISKPAPYW…TLRLVQAFQY (159 aa). The active-site Cysteine sulfenic acid (-SOH) intermediate is C124.

This sequence belongs to the peroxiredoxin family. AhpC/Prx1 subfamily. As to quaternary structure, homodimer; disulfide-linked, upon oxidation. 5 homodimers assemble to form a ring-like decamer. Can form heterodimers with PRDX1. The enzyme can be inactivated by further oxidation of the cysteine sulfenic acid (C(P)-SOH) to sulphinic acid (C(P)-SO2H) and sulphonic acid (C(P)-SO3H) instead of its condensation to a disulfide bond.

The protein resides in the cytoplasm. It is found in the endoplasmic reticulum. The enzyme catalyses a hydroperoxide + [thioredoxin]-dithiol = an alcohol + [thioredoxin]-disulfide + H2O. Thiol-specific peroxidase that catalyzes the reduction of hydrogen peroxide and organic hydroperoxides to water and alcohols, respectively. Plays a role in cell protection against oxidative stress by detoxifying peroxides and as sensor of hydrogen peroxide-mediated signaling events. Regulates the activation of NF-kappa-B in the cytosol by a modulation of I-kappa-B-alpha phosphorylation. In Homo sapiens (Human), this protein is Peroxiredoxin-4 (PRDX4).